The sequence spans 941 residues: Glycine dehydrogenase (decarboxylating) (941 aa).

Lysine 692 is subject to N6-(pyridoxal phosphate)lysine.

Belongs to the GcvP family. The glycine cleavage system is composed of four proteins: P, T, L and H. The cofactor is pyridoxal 5'-phosphate.

The enzyme catalyses N(6)-[(R)-lipoyl]-L-lysyl-[glycine-cleavage complex H protein] + glycine + H(+) = N(6)-[(R)-S(8)-aminomethyldihydrolipoyl]-L-lysyl-[glycine-cleavage complex H protein] + CO2. Functionally, the glycine cleavage system catalyzes the degradation of glycine. The P protein binds the alpha-amino group of glycine through its pyridoxal phosphate cofactor; CO(2) is released and the remaining methylamine moiety is then transferred to the lipoamide cofactor of the H protein. In Mycobacterium bovis (strain ATCC BAA-935 / AF2122/97), this protein is Glycine dehydrogenase (decarboxylating).